Here is a 90-residue protein sequence, read N- to C-terminus: Putative Fis-like DNA-binding protein (90 aa).

Residues 66–85 (QSRAAALLGIHRATLRKKLK) constitute a DNA-binding region (H-T-H motif).

Belongs to the transcriptional regulatory Fis family.

The chain is Putative Fis-like DNA-binding protein from Xylella fastidiosa (strain 9a5c).